A 923-amino-acid chain; its full sequence is Neuropilin-1 (923 aa).

An N-terminal signal peptide occupies residues 1–21 (MERGLPLLCAVLALVLAPAGA). Over 22 to 856 (FRNDKCGDTI…PGNVLKTLDP (835 aa)) the chain is Extracellular. Disulfide bonds link cysteine 27/cysteine 54, cysteine 82/cysteine 104, and cysteine 147/cysteine 173. CUB domains follow at residues 27–141 (CGDT…YEIF) and 147–265 (CSQN…YSVL). Asparagine 150 is a glycosylation site (N-linked (GlcNAc...) asparagine). Ca(2+) contacts are provided by glutamate 195, aspartate 209, and aspartate 250. Cysteine 206 and cysteine 228 form a disulfide bridge. N-linked (GlcNAc...) asparagine glycosylation is found at asparagine 261, asparagine 300, and asparagine 522. Disulfide bonds link cysteine 275–cysteine 424 and cysteine 431–cysteine 583. F5/8 type C domains are found at residues 275 to 424 (CMEA…VYGC) and 431 to 583 (CSGM…LLGC). Residue serine 612 is glycosylated (O-linked (Xyl...) (chondroitin sulfate) serine; alternate). A glycan (O-linked (Xyl...) (heparan sulfate) serine; alternate) is linked at serine 612. Positions 645–811 (TYGFNCEFGW…NHISQEDCAK (167 aa)) constitute an MAM domain. The tract at residues 820–845 (PEIKIDETGSTPGYEGEGEGDKNISR) is disordered. Residue serine 829 is glycosylated (O-linked (Xyl...) (chondroitin sulfate) serine). Asparagine 842 is a glycosylation site (N-linked (GlcNAc...) asparagine). A helical transmembrane segment spans residues 857–879 (ILITIIAMSALGVLLGAVCGVVL). At 880–923 (YCACWHNGMSERNLSALENYNFELVDGVKLKKDKLNTQSTYSEA) the chain is on the cytoplasmic side. A Phosphoserine modification is found at serine 894.

Belongs to the neuropilin family. Homodimer, and heterodimer with NRP2. Interacts with FER. Interacts with PLXNB1. Interacts with VEGFA. Interacts with ABCB8/MITOSUR in mitochondria. In terms of assembly, (Microbial infection) Interacts with SARS coronavirus-2/SARS-CoV-2 spike protein S1 (via the CendR motif RRAR). The expression of isoforms 1 and 2 does not seem to overlap. Expressed in olfactory epithelium (at protein level). Expressed in fibroblasts (at protein level). Expressed by the blood vessels of different tissues. In the developing embryo it is found predominantly in the nervous system. In adult tissues, it is highly expressed in heart and placenta; moderately in lung, liver, skeletal muscle, kidney and pancreas; and low in adult brain. Expressed in the central nervous system, including olfactory related regions such as the olfactory tubercles and paraolfactory gyri. In terms of tissue distribution, the expression of isoforms 1 and 2 does not seem to overlap. Found in liver hepatocytes, kidney distal and proximal tubules.

The protein localises to the secreted. It localises to the mitochondrion membrane. The protein resides in the cell membrane. Its subcellular location is the cytoplasm. Functionally, cell-surface receptor involved in the development of the cardiovascular system, in angiogenesis, in the formation of certain neuronal circuits and in organogenesis outside the nervous system. Mediates the chemorepulsant activity of semaphorins. Recognizes a C-end rule (CendR) motif R/KXXR/K on its ligands which causes cellular internalization and vascular leakage. It binds to semaphorin 3A, the PLGF-2 isoform of PGF, the VEGF165 isoform of VEGFA and VEGFB. Coexpression with KDR results in increased VEGF165 binding to KDR as well as increased chemotaxis. Regulates VEGF-induced angiogenesis. Binding to VEGFA initiates a signaling pathway needed for motor neuron axon guidance and cell body migration, including for the caudal migration of facial motor neurons from rhombomere 4 to rhombomere 6 during embryonic development. Regulates mitochondrial iron transport via interaction with ABCB8/MITOSUR. (Microbial infection) Acts as a host factor for human coronavirus SARS-CoV-2 infection. Recognizes and binds to CendR motif RRAR on SARS-CoV-2 spike protein S1 which enhances SARS-CoV-2 infection. Its function is as follows. Binds VEGF-165 and may inhibit its binding to cells. May induce apoptosis by sequestering VEGF-165. May bind as well various members of the semaphorin family. Its expression has an averse effect on blood vessel number and integrity. This is Neuropilin-1 from Homo sapiens (Human).